A 112-amino-acid chain; its full sequence is UPF0342 protein SSA_1465 (112 aa).

Belongs to the UPF0342 family.

The polypeptide is UPF0342 protein SSA_1465 (Streptococcus sanguinis (strain SK36)).